Consider the following 122-residue polypeptide: Large ribosomal subunit protein bL19 (122 aa).

It belongs to the bacterial ribosomal protein bL19 family.

In terms of biological role, this protein is located at the 30S-50S ribosomal subunit interface and may play a role in the structure and function of the aminoacyl-tRNA binding site. The chain is Large ribosomal subunit protein bL19 from Novosphingobium aromaticivorans (strain ATCC 700278 / DSM 12444 / CCUG 56034 / CIP 105152 / NBRC 16084 / F199).